The sequence spans 157 residues: Endoribonuclease YbeY (157 aa).

Positions 116, 120, and 126 each coordinate Zn(2+).

It belongs to the endoribonuclease YbeY family. It depends on Zn(2+) as a cofactor.

It localises to the cytoplasm. Single strand-specific metallo-endoribonuclease involved in late-stage 70S ribosome quality control and in maturation of the 3' terminus of the 16S rRNA. The sequence is that of Endoribonuclease YbeY from Blochmanniella pennsylvanica (strain BPEN).